Consider the following 212-residue polypeptide: Prolactin (212 aa).

Residues 1–26 form the signal peptide; that stretch reads MARCCKCPRLHLAVTVLACVLVFTEG. Disulfide bonds link Cys71-Cys185 and Cys202-Cys212.

Belongs to the somatotropin/prolactin family. In terms of tissue distribution, pituitary gland.

Its subcellular location is the secreted. The sequence is that of Prolactin (prl) from Ictalurus punctatus (Channel catfish).